Here is a 114-residue protein sequence, read N- to C-terminus: Protachykinin (114 aa).

Positions 1–19 (MKFLLPSIVIFLVLCQVFG) are cleaved as a signal peptide. Positions 20 to 55 (EELGPKEDLDYWTGSNQVQDEWLQADPFREIIRRMT) are excised as a propeptide. A methionine amide mark is found at M67 and M91.

This sequence belongs to the tachykinin family. Expressed in all parts of the brain, with robust expression in the olfactory bulbs and tracts, moderate expression in the hypothalamus and posterior brain, and weak expression in the telencephalon-preoptic region and optic tectum-thalamus. Also expressed in nerve fibers, intestine, testes and pituitary gland. Not expressed in the liver or kidneys.

It localises to the secreted. Functionally, tachykinins are active peptides which excite neurons, evoke behavioral responses, are potent vasodilators and secretagogues, and contract (directly or indirectly) many smooth muscles. In terms of biological role, substance P produces a voltage-dependent inhibition of calcium current in retinal bipolar cells. It can enhance learning and memory, may regulate social approach and feeding behaviors, and can accelerate the functional recovery in postural balance in response to light after unilateral labyrinthectomy. This Carassius auratus (Goldfish) protein is Protachykinin.